Reading from the N-terminus, the 154-residue chain is SsrA-binding protein (154 aa).

It belongs to the SmpB family.

The protein localises to the cytoplasm. Its function is as follows. Required for rescue of stalled ribosomes mediated by trans-translation. Binds to transfer-messenger RNA (tmRNA), required for stable association of tmRNA with ribosomes. tmRNA and SmpB together mimic tRNA shape, replacing the anticodon stem-loop with SmpB. tmRNA is encoded by the ssrA gene; the 2 termini fold to resemble tRNA(Ala) and it encodes a 'tag peptide', a short internal open reading frame. During trans-translation Ala-aminoacylated tmRNA acts like a tRNA, entering the A-site of stalled ribosomes, displacing the stalled mRNA. The ribosome then switches to translate the ORF on the tmRNA; the nascent peptide is terminated with the 'tag peptide' encoded by the tmRNA and targeted for degradation. The ribosome is freed to recommence translation, which seems to be the essential function of trans-translation. The sequence is that of SsrA-binding protein from Solidesulfovibrio magneticus (strain ATCC 700980 / DSM 13731 / RS-1) (Desulfovibrio magneticus).